We begin with the raw amino-acid sequence, 397 residues long: MEKILYLDPFSGIAGDMFLGLLVDLGVDPEELKKRLSKLGVEFELRIRKVNKKGITATKVDVVFPGKEHHEDHIDHEHHGRHLSEIMKILERLEDPAREKATEMFETLAEAESKVHGLPKEKVHFHEVGAMDAVIEIAGAVVGLELLGVERVFCGAVNTGSGFVMTEHGRYPVPAPATAELLKGIPIYMDQKVRAELVTPTGAVILKELVDEFGTPILRIEKVGYGAGTVDLEIPNVLRGYLGFLEGKSERDILIETNVDDMNPQLFGYLMEKLFETGAKDVFYTPIYMKKNRPAVKVSVLCSEEKRDQILKVLFKESTSIGARVFHLEKVEAPRKVISVETEYGKIPVKVAYFDSEVVNVSPEYEACKKIAQEKEVPLKEIYNAVYRKISEVQGNV.

It belongs to the LarC family.

The catalysed reaction is Ni(II)-pyridinium-3,5-bisthiocarboxylate mononucleotide = pyridinium-3,5-bisthiocarboxylate mononucleotide + Ni(2+). Functionally, involved in the biosynthesis of a nickel-pincer cofactor ((SCS)Ni(II) pincer complex). Binds Ni(2+), and functions in nickel delivery to pyridinium-3,5-bisthiocarboxylic acid mononucleotide (P2TMN), to form the mature cofactor. Is thus probably required for the activation of nickel-pincer cofactor-dependent enzymes. The sequence is that of Pyridinium-3,5-bisthiocarboxylic acid mononucleotide nickel insertion protein from Thermotoga petrophila (strain ATCC BAA-488 / DSM 13995 / JCM 10881 / RKU-1).